Reading from the N-terminus, the 47-residue chain is NADH dehydrogenase [ubiquinone] iron-sulfur protein 2 (47 aa).

This sequence belongs to the complex I 49 kDa subunit family. Complex I is composed of about 45 different subunits. This is a component of the iron-sulfur (IP) fragment of the enzyme.

It is found in the mitochondrion inner membrane. It carries out the reaction a ubiquinone + NADH + 5 H(+)(in) = a ubiquinol + NAD(+) + 4 H(+)(out). In terms of biological role, core subunit of the mitochondrial membrane respiratory chain NADH dehydrogenase (Complex I) that is believed to belong to the minimal assembly required for catalysis. Complex I functions in the transfer of electrons from NADH to the respiratory chain. The immediate electron acceptor for the enzyme is believed to be ubiquinone. Component of the iron-sulfur (IP) fragment of the enzyme. This Solanum tuberosum (Potato) protein is NADH dehydrogenase [ubiquinone] iron-sulfur protein 2 (NAD7).